We begin with the raw amino-acid sequence, 312 residues long: MMKNPLAVSIPGLTLKNPIIPASGCFGFGEEYANYYDLDQLGSIMIKATTPQARYGNPTPRVAETPSGMLNAIGLQNPGLDVVMQEKLPKLEKYPNLPIIANVAGACEEDYVAVCAKIGQAPNVKAIELNISCPNVKHGGIAFGTDPEVAFQLTQAVKKVASVPIYVKLSPNVTDIVPIAQAIEAGGADGFSMINTLLGMRIDLKTRKPILANQTGGLSGPAIKPVAIRLIRQVASVSQLPIIGMGGVQTVDDVLEMFMAGASAVGVGTANFTDPYICPKLIDGLPKRMEELGIESLEQLIKEVREGQQNAR.

Residues S23 and 47–48 (KA) contribute to the FMN site. Substrate is bound by residues K47 and 71-75 (NAIGL). N102 and N130 together coordinate FMN. N130 is a substrate binding site. The active-site Nucleophile is C133. FMN is bound by residues K168 and I194. 195 to 196 (NT) serves as a coordination point for substrate. Residues G220, 246 to 247 (GG), and 268 to 269 (GT) each bind FMN.

It belongs to the dihydroorotate dehydrogenase family. Type 1 subfamily. As to quaternary structure, heterotetramer of 2 PyrK and 2 PyrD type B subunits. FMN is required as a cofactor.

It localises to the cytoplasm. It carries out the reaction (S)-dihydroorotate + NAD(+) = orotate + NADH + H(+). The protein operates within pyrimidine metabolism; UMP biosynthesis via de novo pathway; orotate from (S)-dihydroorotate (NAD(+) route): step 1/1. Its function is as follows. Catalyzes the conversion of dihydroorotate to orotate with NAD(+) as electron acceptor. This is Dihydroorotate dehydrogenase B (NAD(+)), catalytic subunit (pyrDB) from Enterococcus faecalis (strain ATCC 47077 / OG1RF).